We begin with the raw amino-acid sequence, 352 residues long: Dolichol-phosphate mannosyltransferase (352 aa).

Residues 1-229 (MKVSVIIPTY…HIYRLMKWEG (229 aa)) lie on the Cytoplasmic side of the membrane. GDP-alpha-D-mannose is bound by residues Pro8, Tyr10, Glu12, Val37, Asp39, Asp89, Ala90, Asp91, Gln93, Arg117, Val156, Lys178, Arg202, and Lys208. Mg(2+) contacts are provided by Asp91 and Gln93. The Mn(2+) site is built by Asp91 and Gln93. A helical membrane pass occupies residues 230–256 (EIDRIVKFSIVGLSGILVNEGFLWLFV). At 257–261 (NLGIP) the chain is on the extracellular side. A helical transmembrane segment spans residues 262–286 (KEIAVIPAVELSILNNFFWNDIWTF). Residues 287–293 (KDIRRGS) are Cytoplasmic-facing. A helical transmembrane segment spans residues 294–320 (IFSRLLKFHIAALSGAVVNFIVYWILL). At 321–325 (FLGIH) the chain is on the extracellular side. Residues 326 to 350 (YLIANLVGIVLSFGVRYVINRHVTW) traverse the membrane as a helical segment. Topologically, residues 351–352 (AT) are cytoplasmic.

The protein belongs to the glycosyltransferase 2 family. The cofactor is Mg(2+). It depends on Mn(2+) as a cofactor. Requires Ca(2+) as cofactor.

The protein resides in the cell membrane. The catalysed reaction is a di-trans,poly-cis-dolichyl phosphate + GDP-alpha-D-mannose = a di-trans,poly-cis-dolichyl beta-D-mannosyl phosphate + GDP. The protein operates within protein modification; protein glycosylation. In terms of biological role, transfers mannose from GDP-mannose to dolichol monophosphate to form dolichol phosphate mannose (Dol-P-Man) which is the mannosyl donor in pathways leading to N-glycosylation, glycosyl phosphatidylinositol membrane anchoring, and O-mannosylation of proteins. This is Dolichol-phosphate mannosyltransferase from Pyrococcus furiosus (strain ATCC 43587 / DSM 3638 / JCM 8422 / Vc1).